We begin with the raw amino-acid sequence, 209 residues long: Ribosomal RNA large subunit methyltransferase E (209 aa).

Residues G63, W65, D83, D99, and D124 each contribute to the S-adenosyl-L-methionine site. K164 serves as the catalytic Proton acceptor.

This sequence belongs to the class I-like SAM-binding methyltransferase superfamily. RNA methyltransferase RlmE family.

Its subcellular location is the cytoplasm. The enzyme catalyses uridine(2552) in 23S rRNA + S-adenosyl-L-methionine = 2'-O-methyluridine(2552) in 23S rRNA + S-adenosyl-L-homocysteine + H(+). In terms of biological role, specifically methylates the uridine in position 2552 of 23S rRNA at the 2'-O position of the ribose in the fully assembled 50S ribosomal subunit. The chain is Ribosomal RNA large subunit methyltransferase E from Baumannia cicadellinicola subsp. Homalodisca coagulata.